A 443-amino-acid chain; its full sequence is MVKERSTELVQGFRHSVPYINTHRGKTFVIMLGGEAIEHENFSSIVNDIGLLHSLGIRLVVVYGARPQIDANLAAHQHEPLYHKNIRVTDAKTLELVKQAAGTLQLDITARLSMSLNNTPLQGAHINVVSGNFIIAQPLGVDDGVDYCHSGRIRRIDEEAIHRQLDSGAIVLLGPVAVSVTGESFNLTSEEIATQLAIKLKAEKMIGFCSSQGVTNDDGDIVSELFPNEAQARVEAQETAGDYNSGTVRFLRGAVKACRSGVRRCHLISYQEDGALLQELFSRDGIGTQIVMESAEQIRRATINDIGGILELIRPLEQQGILVRRSREQLEMEIDKFTIIQRDNTTIACAALYPFPEEKIGEMACVAVHPDYRSSARGEVLLERIAAQAKQIGLSKLFVLTTRSIHWFQERGFTPVDIDLLPESKKLMYNYQRRSKVLMADLG.

In terms of domain architecture, N-acetyltransferase spans 296-434 (EQIRRATIND…KKLMYNYQRR (139 aa)).

It belongs to the acetyltransferase family. ArgA subfamily. As to quaternary structure, homohexamer.

The protein resides in the cytoplasm. The enzyme catalyses L-glutamate + acetyl-CoA = N-acetyl-L-glutamate + CoA + H(+). It functions in the pathway amino-acid biosynthesis; L-arginine biosynthesis; N(2)-acetyl-L-ornithine from L-glutamate: step 1/4. This chain is Amino-acid acetyltransferase, found in Escherichia fergusonii (strain ATCC 35469 / DSM 13698 / CCUG 18766 / IAM 14443 / JCM 21226 / LMG 7866 / NBRC 102419 / NCTC 12128 / CDC 0568-73).